A 61-amino-acid polypeptide reads, in one-letter code: Alpha-conotoxin EIIA (61 aa).

An N-terminal signal peptide occupies residues 1-16 (MFIVFLLVVLATTVGS). The propeptide occupies 17–40 (FTLDRVLEGRNAAAIDNALDQRDP). A Pyrrolidone carboxylic acid modification is found at glutamine 43. Residue proline 45 is modified to Hydroxyproline. 2 disulfides stabilise this stretch: cysteine 47–cysteine 53 and cysteine 48–cysteine 58. Cysteine 58 bears the Cysteine amide mark.

It belongs to the conotoxin A superfamily. As to expression, expressed by the venom duct.

It localises to the secreted. Functionally, alpha-conotoxins bind to the nicotinic acetylcholine receptors (nAChR) and inhibit them. This peptide potently blocks muscular nicotinic acetylcholine receptor (CHRNA1-CHRNB1-CHRNG-CHRND), and has no effect on neuronal receptors. It is able to totally displace [125I]-Bgtx from the Torpedo receptor with a complete inhibition in the high micromolar range. It produces a biphasic inhibition curve which fits nicely with a two-site model (Ki of 0.46 and 105 nM). The protein is Alpha-conotoxin EIIA of Conus ermineus (Agate cone).